Consider the following 264-residue polypeptide: Indole-3-glycerol phosphate synthase (264 aa).

Belongs to the TrpC family.

The enzyme catalyses 1-(2-carboxyphenylamino)-1-deoxy-D-ribulose 5-phosphate + H(+) = (1S,2R)-1-C-(indol-3-yl)glycerol 3-phosphate + CO2 + H2O. Its pathway is amino-acid biosynthesis; L-tryptophan biosynthesis; L-tryptophan from chorismate: step 4/5. This chain is Indole-3-glycerol phosphate synthase, found in Polaromonas sp. (strain JS666 / ATCC BAA-500).